We begin with the raw amino-acid sequence, 112 residues long: MCHTSHSSGCPMACPGSPCCVPSTCYPPEGYGTSCCCSAPCVALLCRPLCGVSTCCQPACCVPSPCQVACCVPVSCKPVLCVASFCPTSGCCQPFCPTLVYRPVTWSTPTGC.

Tandem repeats lie at residues 10–14 (CPMAC), 20–24 (CVPST), 25–29 (CYPPE), 35–39 (CCCSA), 41–45 (CVALL), 46–50 (CRPLC), 56–60 (CQPAC), 61–65 (CVPSP), 66–70 (CQVAC), 71–75 (CVPVS), 76–80 (CKPVL), 81–85 (CVASF), 86–90 (CPTSG), 91–95 (CCQPF), and 96–100 (CPTLV). A 15 X 5 AA approximate repeats region spans residues 10–100 (CPMACPGSPC…CCQPFCPTLV (91 aa)).

This sequence belongs to the KRTAP type 12 family. In terms of assembly, interacts with hair keratins. In terms of tissue distribution, restricted to a narrow region of the hair fiber cuticle, lying approximately 20 cell layers above the apex of the dermal papilla of the hair root; not detected in any other tissues.

Its function is as follows. In the hair cortex, hair keratin intermediate filaments are embedded in an interfilamentous matrix, consisting of hair keratin-associated proteins (KRTAP), which are essential for the formation of a rigid and resistant hair shaft through their extensive disulfide bond cross-linking with abundant cysteine residues of hair keratins. The matrix proteins include the high-sulfur and high-glycine-tyrosine keratins. The polypeptide is Keratin-associated protein 12-4 (KRTAP12-4) (Homo sapiens (Human)).